Reading from the N-terminus, the 121-residue chain is Heme-degrading monooxygenase (121 aa).

Residues 2–101 enclose the ABM domain; that stretch reads IIVTNTIKVE…EQREDRKGIV (100 aa). Asparagine 6 lines the Fe cation pocket. The segment at 76-98 is disordered; it reads KSDSFKKAHGRTKDTREQREDRK. Positions 78-98 are enriched in basic and acidic residues; that stretch reads DSFKKAHGRTKDTREQREDRK. Histidine 84 lines the heme pocket.

The protein belongs to the antibiotic biosynthesis monooxygenase family. Heme-degrading monooxygenase IsdG subfamily. Homodimer.

Its subcellular location is the cytoplasm. It catalyses the reaction heme b + 3 reduced [NADPH--hemoprotein reductase] + 3 O2 = biliverdin IXalpha + CO + Fe(2+) + 3 oxidized [NADPH--hemoprotein reductase] + 3 H2O + H(+). Its function is as follows. Allows bacterial pathogens to use the host heme as an iron source. Catalyzes the oxidative degradation of the heme macrocyclic porphyrin ring to the biliverdin in the presence of a suitable electron donor such as ascorbate or NADPH--cytochrome P450 reductase, with subsequent release of free iron. The sequence is that of Heme-degrading monooxygenase from Listeria welshimeri serovar 6b (strain ATCC 35897 / DSM 20650 / CCUG 15529 / CIP 8149 / NCTC 11857 / SLCC 5334 / V8).